A 406-amino-acid chain; its full sequence is RILP-like protein 1 (406 aa).

Serine 7 carries the phosphoserine modification. An RH1 domain is found at 10–97 (AALSALEKNV…RVERMDRIEK (88 aa)). Cysteine 47 is subject to S-nitrosocysteine. A coiled-coil region spans residues 76-258 (ELDELRLELD…KLRERLQGEH (183 aa)). Disordered stretches follow at residues 255–280 (QGEH…ESIS) and 330–354 (EIEE…QPES). Serine 259 bears the Phosphoserine mark. The span at 262-280 (GEEEEAEIPPQPDGEESIS) shows a compositional bias: acidic residues. Residues 294–359 (RPRFTLQELR…PQPESGIKRL (66 aa)) enclose the RH2 domain.

It belongs to the RILPL family. In terms of assembly, interacts (when S-nitrosylated) with GAPDH. Interacts with RAB8A; interaction is dependent on the phosphorylation of 'Thr-72' of RAB8A. Interacts with RAB10 and RAB12; the interaction is dependent on the phosphorylation of 'Thr-73' of RAB10, and 'Ser-105' of RAB12. Post-translationally, S-nitrosylation is required for the interaction with GAPDH. Highly expressed in heart, skeletal muscle, brain and lung (at protein level).

The protein resides in the cytoplasm. The protein localises to the cytosol. It is found in the cytoskeleton. Its subcellular location is the microtubule organizing center. It localises to the centrosome. The protein resides in the centriole. The protein localises to the cilium basal body. Plays a role in the regulation of cell shape and polarity. Plays a role in cellular protein transport, including protein transport away from primary cilia. Neuroprotective protein, which acts by sequestring GAPDH in the cytosol and prevent the apoptotic function of GAPDH in the nucleus. Competes with SIAH1 for binding GAPDH. Does not regulate lysosomal morphology and distribution. Binds to RAB10 following LRRK2-mediated RAB10 phosphorylation which leads to inhibition of ciliogenesis. The chain is RILP-like protein 1 (Rilpl1) from Rattus norvegicus (Rat).